The primary structure comprises 129 residues: Small ribosomal subunit protein uS12 (129 aa).

Asp-89 is modified (3-methylthioaspartic acid). The segment at 101-129 (SLDTSGVADRKQSRSKYGAKQPKAGAAKK) is disordered. Residues 116–129 (KYGAKQPKAGAAKK) show a composition bias toward low complexity.

It belongs to the universal ribosomal protein uS12 family. In terms of assembly, part of the 30S ribosomal subunit. Contacts proteins S8 and S17. May interact with IF1 in the 30S initiation complex.

Functionally, with S4 and S5 plays an important role in translational accuracy. Its function is as follows. Interacts with and stabilizes bases of the 16S rRNA that are involved in tRNA selection in the A site and with the mRNA backbone. Located at the interface of the 30S and 50S subunits, it traverses the body of the 30S subunit contacting proteins on the other side and probably holding the rRNA structure together. The combined cluster of proteins S8, S12 and S17 appears to hold together the shoulder and platform of the 30S subunit. The chain is Small ribosomal subunit protein uS12 from Chlorobaculum parvum (strain DSM 263 / NCIMB 8327) (Chlorobium vibrioforme subsp. thiosulfatophilum).